Consider the following 332-residue polypeptide: UPF0194 membrane protein YbhG (332 aa).

The signal sequence occupies residues 1–16 (MMKKTVVIGLAVVVLA). A coiled-coil region spans residues 108 to 209 (EEIAQAAAAV…LNLQDSTLIA (102 aa)).

The protein belongs to the UPF0194 family.

It is found in the periplasm. This chain is UPF0194 membrane protein YbhG, found in Shigella dysenteriae serotype 1 (strain Sd197).